The chain runs to 566 residues: Glutamate--tRNA ligase (566 aa).

The short motif at 104–114 (PNPDGPLHLGN) is the 'HIGH' region element.

This sequence belongs to the class-I aminoacyl-tRNA synthetase family. Glutamate--tRNA ligase type 2 subfamily.

The protein resides in the cytoplasm. The catalysed reaction is tRNA(Glu) + L-glutamate + ATP = L-glutamyl-tRNA(Glu) + AMP + diphosphate. In terms of biological role, catalyzes the attachment of glutamate to tRNA(Glu) in a two-step reaction: glutamate is first activated by ATP to form Glu-AMP and then transferred to the acceptor end of tRNA(Glu). The sequence is that of Glutamate--tRNA ligase from Metallosphaera sedula (strain ATCC 51363 / DSM 5348 / JCM 9185 / NBRC 15509 / TH2).